The sequence spans 943 residues: AP-1 complex subunit beta-1 (943 aa).

Lys-318 carries the N6-acetyllysine modification. A 3'-nitrotyrosine modification is found at Tyr-574. Residues 584 to 621 are disordered; it reads GGRGVVHKSLPPRTASSESTESPETAPAGAPAGDQPDV. The span at 594–616 shows a compositional bias: low complexity; the sequence is PPRTASSESTESPETAPAGAPAG.

It belongs to the adaptor complexes large subunit family. In terms of assembly, adaptor protein complex 1 (AP-1) is a heterotetramer composed of two large adaptins (gamma-type subunit AP1G1 and beta-type subunit AP1B1), a medium adaptin (mu-type subunit AP1M1 or AP1M2) and a small adaptin (sigma-type subunit AP1S1 or AP1S2 or AP1S3). Widely expressed.

The protein localises to the cytoplasmic vesicle. Its subcellular location is the clathrin-coated vesicle membrane. It localises to the golgi apparatus. Functionally, subunit of clathrin-associated adaptor protein complex 1 that plays a role in protein sorting in the late-Golgi/trans-Golgi network (TGN) and/or endosomes. The AP complexes mediate both the recruitment of clathrin to membranes and the recognition of sorting signals within the cytosolic tails of transmembrane cargo molecules. In Mus musculus (Mouse), this protein is AP-1 complex subunit beta-1 (Ap1b1).